Here is a 106-residue protein sequence, read N- to C-terminus: Venom family 8-like peptide Pr8a (106 aa).

The signal sequence occupies residues 1-17; it reads MSPIAFLLPFLLQMVLS.

Contains 2 disulfide bonds. Expressed by the venom gland (anterior main gland) (at protein level).

It localises to the secreted. The polypeptide is Venom family 8-like peptide Pr8a (Platymeris rhadamanthus (Red spot assassin bug)).